A 481-amino-acid chain; its full sequence is Argininosuccinate lyase (481 aa).

The protein belongs to the lyase 1 family. Argininosuccinate lyase subfamily.

The protein resides in the cytoplasm. The catalysed reaction is 2-(N(omega)-L-arginino)succinate = fumarate + L-arginine. It participates in amino-acid biosynthesis; L-arginine biosynthesis; L-arginine from L-ornithine and carbamoyl phosphate: step 3/3. This chain is Argininosuccinate lyase, found in Methanococcus maripaludis (strain C5 / ATCC BAA-1333).